A 630-amino-acid polypeptide reads, in one-letter code: Cytochrome B pre-mRNA-processing protein 2 (630 aa).

It localises to the mitochondrion. Appears to be specifically required for the splicing of the terminal intron (bI5) of the cytochrome b pre-mRNA. Can also stimulates the splicing of the omega intron of the precursor of large ribosomal RNA. The polypeptide is Cytochrome B pre-mRNA-processing protein 2 (CBP2) (Saccharomyces cerevisiae (strain ATCC 204508 / S288c) (Baker's yeast)).